An 82-amino-acid polypeptide reads, in one-letter code: Small ribosomal subunit protein bS18 (82 aa).

The protein belongs to the bacterial ribosomal protein bS18 family. As to quaternary structure, part of the 30S ribosomal subunit. Forms a tight heterodimer with protein bS6.

Functionally, binds as a heterodimer with protein bS6 to the central domain of the 16S rRNA, where it helps stabilize the platform of the 30S subunit. This Chlamydia felis (strain Fe/C-56) (Chlamydophila felis) protein is Small ribosomal subunit protein bS18.